We begin with the raw amino-acid sequence, 283 residues long: ESX-1 secretion-associated protein EspG1 (283 aa).

Belongs to the EspG family. As to quaternary structure, interacts specifically with ESX-1-dependent PE/PPE proteins. Interacts with PPE68.

The protein resides in the cytoplasm. Functionally, specific chaperone for cognate PE/PPE proteins. Plays an important role in preventing aggregation of PE/PPE dimers. This chain is ESX-1 secretion-associated protein EspG1, found in Mycobacterium tuberculosis (strain ATCC 25618 / H37Rv).